The primary structure comprises 345 residues: N-acetyl-gamma-glutamyl-phosphate reductase (345 aa).

Residue Cys149 is part of the active site.

It belongs to the NAGSA dehydrogenase family. Type 1 subfamily.

The protein localises to the cytoplasm. It carries out the reaction N-acetyl-L-glutamate 5-semialdehyde + phosphate + NADP(+) = N-acetyl-L-glutamyl 5-phosphate + NADPH + H(+). The protein operates within amino-acid biosynthesis; L-arginine biosynthesis; N(2)-acetyl-L-ornithine from L-glutamate: step 3/4. Catalyzes the NADPH-dependent reduction of N-acetyl-5-glutamyl phosphate to yield N-acetyl-L-glutamate 5-semialdehyde. This is N-acetyl-gamma-glutamyl-phosphate reductase from Bacillus mycoides (strain KBAB4) (Bacillus weihenstephanensis).